Here is a 459-residue protein sequence, read N- to C-terminus: Sulfide:quinone oxidoreductase, mitochondrial (459 aa).

A mitochondrion-targeting transit peptide spans 1–24 (MLTLNSTIKSVTGSFQSASMLARF). Residue 35 to 39 (GGGSA) participates in FAD binding. Catalysis depends on cysteine persulfide intermediate residues Cys204 and Cys383.

The protein belongs to the SQRD family. It depends on FAD as a cofactor.

The protein resides in the mitochondrion. Its function is as follows. Catalyzes the oxidation of hydrogen sulfide, with the help of a quinone. In Schizosaccharomyces pombe (strain 972 / ATCC 24843) (Fission yeast), this protein is Sulfide:quinone oxidoreductase, mitochondrial (hmt2).